The following is a 116-amino-acid chain: UPF0122 protein CA_C1753 (116 aa).

It belongs to the UPF0122 family.

Might take part in the signal recognition particle (SRP) pathway. This is inferred from the conservation of its genetic proximity to ftsY/ffh. May be a regulatory protein. This chain is UPF0122 protein CA_C1753, found in Clostridium acetobutylicum (strain ATCC 824 / DSM 792 / JCM 1419 / IAM 19013 / LMG 5710 / NBRC 13948 / NRRL B-527 / VKM B-1787 / 2291 / W).